The primary structure comprises 401 residues: Imidazolonepropionase (401 aa).

Residues histidine 66 and histidine 68 each coordinate Fe(3+). Zn(2+)-binding residues include histidine 66 and histidine 68. Arginine 75, tyrosine 138, and histidine 171 together coordinate 4-imidazolone-5-propanoate. Tyrosine 138 provides a ligand contact to N-formimidoyl-L-glutamate. A Fe(3+)-binding site is contributed by histidine 236. A Zn(2+)-binding site is contributed by histidine 236. A 4-imidazolone-5-propanoate-binding site is contributed by glutamine 239. Position 311 (aspartate 311) interacts with Fe(3+). Aspartate 311 is a binding site for Zn(2+). N-formimidoyl-L-glutamate-binding residues include asparagine 313 and glycine 315. Threonine 316 lines the 4-imidazolone-5-propanoate pocket.

The protein belongs to the metallo-dependent hydrolases superfamily. HutI family. The cofactor is Zn(2+). Fe(3+) is required as a cofactor.

The protein localises to the cytoplasm. It carries out the reaction 4-imidazolone-5-propanoate + H2O = N-formimidoyl-L-glutamate. It functions in the pathway amino-acid degradation; L-histidine degradation into L-glutamate; N-formimidoyl-L-glutamate from L-histidine: step 3/3. Catalyzes the hydrolytic cleavage of the carbon-nitrogen bond in imidazolone-5-propanoate to yield N-formimidoyl-L-glutamate. It is the third step in the universal histidine degradation pathway. The chain is Imidazolonepropionase from Pseudomonas entomophila (strain L48).